Consider the following 131-residue polypeptide: MNKLTLLLKFLIQAFMWFAIASEFVSLLYEIFHSLKENYFLGLETHKILVKVLNVIIIYELFTTLLIALEERRIKLILIIDTAMIFFIRELLIVLFTYKKLELSEGIASALILGTLGILRFLYLKYKIDVE.

4 helical membrane passes run 7–29, 49–69, 76–98, and 102–124; these read LLKF…SLLY, LVKV…LIAL, LILI…LFTY, and ELSE…FLYL.

It localises to the cell membrane. This is an uncharacterized protein from Aquifex aeolicus (strain VF5).